The primary structure comprises 281 residues: Probable splicing factor, arginine/serine-rich 2 (281 aa).

Residues 2 to 72 (VRVYIGRLPN…ERVILEFPRR (71 aa)) form the RRM 1 domain. Basic and acidic residues-rich tracts occupy residues 78-97 (EERSGSGFRGREPTFRKGGE) and 168-190 (KLQGEDLNGRKLKCTDETRDRSR). 2 disordered regions span residues 78-100 (EERSGSGFRGREPTFRKGGERQF) and 168-281 (KLQG…SASP). The 75-residue stretch at 112-186 (FRLVIDNLST…RKLKCTDETR (75 aa)) folds into the RRM 2 domain. The segment covering 191-215 (SRSPRRRSRSRSPTRSRSPPARRRS) has biased composition (basic residues). A compositionally biased stretch (basic and acidic residues) spans 216-225 (PGSDRSDRKS). Basic residues predominate over residues 245 to 254 (RSRSGGRRSR).

The protein belongs to the splicing factor SR family. Post-translationally, extensively phosphorylated on serine residues in the RS domain.

It is found in the nucleus. Plays a functionally redundant role in spermatogenesis and growth rate control. Required for the development of somatic gonad structures and for progression from larval stage to adulthood. The protein is Probable splicing factor, arginine/serine-rich 2 (rsp-2) of Caenorhabditis elegans.